The primary structure comprises 352 residues: Holliday junction branch migration complex subunit RuvB (352 aa).

The segment at 4–185 (ADRLIAATGP…FGIVQRLEFY (182 aa)) is large ATPase domain (RuvB-L). ATP-binding positions include Ile-24, Arg-25, Gly-66, Lys-69, Thr-70, Thr-71, 132–134 (EDF), Arg-175, Tyr-185, and Arg-222. Thr-70 serves as a coordination point for Mg(2+). Residues 186–256 (STADLATIVS…IADLALNLLD (71 aa)) form a small ATPAse domain (RuvB-S) region. Residues 259–352 (ERGFDHQDRR…VDEFLDAVDD (94 aa)) are head domain (RuvB-H). Residues Arg-295, Arg-314, and Arg-319 each contribute to the DNA site.

It belongs to the RuvB family. In terms of assembly, homohexamer. Forms an RuvA(8)-RuvB(12)-Holliday junction (HJ) complex. HJ DNA is sandwiched between 2 RuvA tetramers; dsDNA enters through RuvA and exits via RuvB. An RuvB hexamer assembles on each DNA strand where it exits the tetramer. Each RuvB hexamer is contacted by two RuvA subunits (via domain III) on 2 adjacent RuvB subunits; this complex drives branch migration. In the full resolvosome a probable DNA-RuvA(4)-RuvB(12)-RuvC(2) complex forms which resolves the HJ.

The protein resides in the cytoplasm. The enzyme catalyses ATP + H2O = ADP + phosphate + H(+). In terms of biological role, the RuvA-RuvB-RuvC complex processes Holliday junction (HJ) DNA during genetic recombination and DNA repair, while the RuvA-RuvB complex plays an important role in the rescue of blocked DNA replication forks via replication fork reversal (RFR). RuvA specifically binds to HJ cruciform DNA, conferring on it an open structure. The RuvB hexamer acts as an ATP-dependent pump, pulling dsDNA into and through the RuvAB complex. RuvB forms 2 homohexamers on either side of HJ DNA bound by 1 or 2 RuvA tetramers; 4 subunits per hexamer contact DNA at a time. Coordinated motions by a converter formed by DNA-disengaged RuvB subunits stimulates ATP hydrolysis and nucleotide exchange. Immobilization of the converter enables RuvB to convert the ATP-contained energy into a lever motion, pulling 2 nucleotides of DNA out of the RuvA tetramer per ATP hydrolyzed, thus driving DNA branch migration. The RuvB motors rotate together with the DNA substrate, which together with the progressing nucleotide cycle form the mechanistic basis for DNA recombination by continuous HJ branch migration. Branch migration allows RuvC to scan DNA until it finds its consensus sequence, where it cleaves and resolves cruciform DNA. This Pseudomonas fluorescens (strain ATCC BAA-477 / NRRL B-23932 / Pf-5) protein is Holliday junction branch migration complex subunit RuvB.